Here is a 247-residue protein sequence, read N- to C-terminus: Protein Thf1 (247 aa).

A coiled-coil region spans residues 198–224 (IAQVRQAMDDILEAQKKRREADQAKKE). The segment at 209–247 (LEAQKKRREADQAKKEGSDDTPTTEASTPDSEPTSEVSS) is disordered. Residues 210 to 226 (EAQKKRREADQAKKEGS) show a composition bias toward basic and acidic residues. Over residues 228 to 247 (DTPTTEASTPDSEPTSEVSS) the composition is skewed to polar residues.

This sequence belongs to the THF1 family.

Its function is as follows. May be involved in photosynthetic membrane biogenesis. This chain is Protein Thf1, found in Acaryochloris marina (strain MBIC 11017).